Here is an 88-residue protein sequence, read N- to C-terminus: Small ribosomal subunit protein uS17 (88 aa).

Belongs to the universal ribosomal protein uS17 family. Part of the 30S ribosomal subunit.

Its function is as follows. One of the primary rRNA binding proteins, it binds specifically to the 5'-end of 16S ribosomal RNA. This is Small ribosomal subunit protein uS17 from Helicobacter hepaticus (strain ATCC 51449 / 3B1).